The sequence spans 1940 residues: Myosin-3 (1940 aa).

Positions 33 to 82 (DAKTYCFVVDSKEEYAKGKIKSSQDGKVTVETEDNRTLVVKPEDVYAMNP) constitute a Myosin N-terminal SH3-like domain. The Myosin motor domain maps to 86-779 (DRIEDMAMLT…LLGTLEEMRD (694 aa)). An N6,N6,N6-trimethyllysine modification is found at K130. Position 179–186 (179–186 (GESGAGKT)) interacts with ATP. Actin-binding stretches follow at residues 656–678 (LNKL…IPNE) and 758–772 (KFGH…GLLG). The 30-residue stretch at 782–811 (LAKLITRTQAVCRGFLMRVEFQKMVQRRES) folds into the IQ domain. Residues 840–1933 (LLKSAETEKE…KTRDFTSSRM (1094 aa)) are a coiled coil.

The protein belongs to the TRAFAC class myosin-kinesin ATPase superfamily. Myosin family. In terms of assembly, muscle myosin is a hexameric protein that consists of 2 heavy chain subunits (MHC), 2 alkali light chain subunits (MLC) and 2 regulatory light chain subunits (MLC-2). Expressed in fetal bone, thymus, placenta, heart, brain, and liver.

It localises to the cytoplasm. It is found in the myofibril. Functionally, muscle contraction. The sequence is that of Myosin-3 (MYH3) from Homo sapiens (Human).